Here is a 421-residue protein sequence, read N- to C-terminus: Serine hydroxymethyltransferase (421 aa).

Residues L118 and 122 to 124 (GHL) each bind (6S)-5,6,7,8-tetrahydrofolate. At K226 the chain carries N6-(pyridoxal phosphate)lysine.

It belongs to the SHMT family. Homodimer. The cofactor is pyridoxal 5'-phosphate.

The protein localises to the cytoplasm. It catalyses the reaction (6R)-5,10-methylene-5,6,7,8-tetrahydrofolate + glycine + H2O = (6S)-5,6,7,8-tetrahydrofolate + L-serine. Its pathway is one-carbon metabolism; tetrahydrofolate interconversion. It functions in the pathway amino-acid biosynthesis; glycine biosynthesis; glycine from L-serine: step 1/1. Its function is as follows. Catalyzes the reversible interconversion of serine and glycine with tetrahydrofolate (THF) serving as the one-carbon carrier. This reaction serves as the major source of one-carbon groups required for the biosynthesis of purines, thymidylate, methionine, and other important biomolecules. Also exhibits THF-independent aldolase activity toward beta-hydroxyamino acids, producing glycine and aldehydes, via a retro-aldol mechanism. The polypeptide is Serine hydroxymethyltransferase (Mycoplasmopsis agalactiae (strain NCTC 10123 / CIP 59.7 / PG2) (Mycoplasma agalactiae)).